Reading from the N-terminus, the 753-residue chain is Subtilisin-like protease SBT3.17 (753 aa).

The signal sequence occupies residues 1 to 29; it reads MGNSFLIADTSSLVIGLLLILNGVFISAA. Positions 30–116 are cleaved as a propeptide — activation peptide; that stretch reads KHYGLNKIHI…VVPSRVMRLK (87 aa). Residues 38–115 enclose the Inhibitor I9 domain; the sequence is HIVHLGAKQH…RVVPSRVMRL (78 aa). N-linked (GlcNAc...) asparagine glycosylation occurs at Asn97. Positions 120–603 constitute a Peptidase S8 domain; the sequence is TFDYLGLLPT…GGLINPEKVT (484 aa). Catalysis depends on Asp150, which acts as the Charge relay system. A glycan (N-linked (GlcNAc...) asparagine) is linked at Asn161. His227 functions as the Charge relay system in the catalytic mechanism. Asn369 is a glycosylation site (N-linked (GlcNAc...) asparagine). The Charge relay system role is filled by Ser534. Asn639, Asn704, and Asn737 each carry an N-linked (GlcNAc...) asparagine glycan.

It belongs to the peptidase S8 family.

It is found in the secreted. This is Subtilisin-like protease SBT3.17 from Arabidopsis thaliana (Mouse-ear cress).